Consider the following 648-residue polypeptide: Chaperone protein HtpG (648 aa).

The segment at 1–353 (MNARVEQLEF…AQDMSLNVSR (353 aa)) is a; substrate-binding. The segment at 354 to 567 (EILQQDRQIK…TFGITPALAR (214 aa)) is b. The segment at 568–648 (IYRATGQDVP…LLADRLTRTL (81 aa)) is c.

The protein belongs to the heat shock protein 90 family. As to quaternary structure, homodimer.

It is found in the cytoplasm. In terms of biological role, molecular chaperone. Has ATPase activity. The protein is Chaperone protein HtpG of Mycobacterium ulcerans (strain Agy99).